The chain runs to 492 residues: Probable cytosol aminopeptidase (492 aa).

Positions 259 and 264 each coordinate Mn(2+). The active site involves Lys-271. Residues Asp-283, Asp-342, and Glu-344 each coordinate Mn(2+). Residue Arg-346 is part of the active site.

It belongs to the peptidase M17 family. Requires Mn(2+) as cofactor.

The protein localises to the cytoplasm. The enzyme catalyses Release of an N-terminal amino acid, Xaa-|-Yaa-, in which Xaa is preferably Leu, but may be other amino acids including Pro although not Arg or Lys, and Yaa may be Pro. Amino acid amides and methyl esters are also readily hydrolyzed, but rates on arylamides are exceedingly low.. It catalyses the reaction Release of an N-terminal amino acid, preferentially leucine, but not glutamic or aspartic acids.. Its function is as follows. Presumably involved in the processing and regular turnover of intracellular proteins. Catalyzes the removal of unsubstituted N-terminal amino acids from various peptides. The protein is Probable cytosol aminopeptidase (pepA) of Synechocystis sp. (strain ATCC 27184 / PCC 6803 / Kazusa).